Consider the following 148-residue polypeptide: Cytochrome c-type biogenesis protein CcmE (148 aa).

Residues 1-7 (MKPRNRR) are Cytoplasmic-facing. Residues 8–28 (IALIVAGLSALGIATALVLNA) traverse the membrane as a helical; Signal-anchor for type II membrane protein segment. Residues 29–148 (FQSNLVFFFT…VQKKPASRKP (120 aa)) are Periplasmic-facing. Heme contacts are provided by histidine 123 and tyrosine 127. The disordered stretch occupies residues 128-148 (MPPEAQHALDEVQKKPASRKP).

Belongs to the CcmE/CycJ family.

The protein localises to the cell inner membrane. In terms of biological role, heme chaperone required for the biogenesis of c-type cytochromes. Transiently binds heme delivered by CcmC and transfers the heme to apo-cytochromes in a process facilitated by CcmF and CcmH. The protein is Cytochrome c-type biogenesis protein CcmE of Pseudomonas aeruginosa.